The sequence spans 425 residues: tRNA(Ile)-lysidine synthase (425 aa).

ATP is bound at residue Ser27–Ser32.

It belongs to the tRNA(Ile)-lysidine synthase family.

Its subcellular location is the cytoplasm. It carries out the reaction cytidine(34) in tRNA(Ile2) + L-lysine + ATP = lysidine(34) in tRNA(Ile2) + AMP + diphosphate + H(+). Functionally, ligates lysine onto the cytidine present at position 34 of the AUA codon-specific tRNA(Ile) that contains the anticodon CAU, in an ATP-dependent manner. Cytidine is converted to lysidine, thus changing the amino acid specificity of the tRNA from methionine to isoleucine. This Streptococcus sanguinis (strain SK36) protein is tRNA(Ile)-lysidine synthase.